The following is a 270-amino-acid chain: Tryptophan synthase alpha chain (270 aa).

Catalysis depends on proton acceptor residues E49 and D60.

It belongs to the TrpA family. Tetramer of two alpha and two beta chains.

It carries out the reaction (1S,2R)-1-C-(indol-3-yl)glycerol 3-phosphate + L-serine = D-glyceraldehyde 3-phosphate + L-tryptophan + H2O. Its pathway is amino-acid biosynthesis; L-tryptophan biosynthesis; L-tryptophan from chorismate: step 5/5. In terms of biological role, the alpha subunit is responsible for the aldol cleavage of indoleglycerol phosphate to indole and glyceraldehyde 3-phosphate. This Thermobifida fusca (strain YX) protein is Tryptophan synthase alpha chain.